We begin with the raw amino-acid sequence, 117 residues long: Immunoglobulin heavy variable 1-69 (117 aa).

The N-terminal stretch at 1–19 (MDWTWRFLFVVAAATGVQS) is a signal peptide. Gln20 is subject to Pyrrolidone carboxylic acid. Residues 20 to 44 (QVQLVQSGAEVKKPGSSVKVSCKAS) form a framework-1 region. The region spanning 20–117 (QVQLVQSGAE…EDTAVYYCAR (98 aa)) is the Ig-like domain. A disulfide bridge links Cys41 with Cys115. The interval 45 to 52 (GGTFSSYA) is complementarity-determining-1. Residues 53–69 (ISWVRQAPGQGLEWMGG) form a framework-2 region. Residues 70 to 77 (IIPIFGTA) are complementarity-determining-2. Positions 78–115 (NYAQKFQGRVTITADKSTSTAYMELSSLRSEDTAVYYC) are framework-3. The segment at 116 to 117 (AR) is complementarity-determining-3.

Immunoglobulins are composed of two identical heavy chains and two identical light chains; disulfide-linked.

Its subcellular location is the secreted. The protein localises to the cell membrane. Functionally, v region of the variable domain of immunoglobulin heavy chains that participates in the antigen recognition. Immunoglobulins, also known as antibodies, are membrane-bound or secreted glycoproteins produced by B lymphocytes. In the recognition phase of humoral immunity, the membrane-bound immunoglobulins serve as receptors which, upon binding of a specific antigen, trigger the clonal expansion and differentiation of B lymphocytes into immunoglobulins-secreting plasma cells. Secreted immunoglobulins mediate the effector phase of humoral immunity, which results in the elimination of bound antigens. The antigen binding site is formed by the variable domain of one heavy chain, together with that of its associated light chain. Thus, each immunoglobulin has two antigen binding sites with remarkable affinity for a particular antigen. The variable domains are assembled by a process called V-(D)-J rearrangement and can then be subjected to somatic hypermutations which, after exposure to antigen and selection, allow affinity maturation for a particular antigen. The polypeptide is Immunoglobulin heavy variable 1-69 (Homo sapiens (Human)).